Here is a 352-residue protein sequence, read N- to C-terminus: PDZ and LIM domain protein 2 (352 aa).

A PDZ domain is found at Met1–Gln84. Disordered stretches follow at residues Ser67–Leu97 and Tyr111–Ala149. The segment covering Asp81–Ser95 has biased composition (polar residues). Residues Tyr111–Pro135 show a composition bias toward low complexity. Position 124 is a phosphoserine (Ser124). Thr126 bears the Phosphothreonine mark. Ser127, Ser129, Ser134, Ser137, Ser143, Ser161, Ser197, Ser203, Ser213, and Ser266 each carry phosphoserine. Positions Leu170–Ser213 are disordered. The LIM zinc-binding domain maps to His284–Ala344.

In terms of assembly, interacts with alpha-actinins ACTN1 and ACTN4, FLNA and MYH9. Interacts (via LIM zinc-binding domain) with MKRN2.

Its subcellular location is the cytoplasm. The protein resides in the nucleus. It localises to the cytoskeleton. Functionally, probable adapter protein located at the actin cytoskeleton that promotes cell attachment. Necessary for the migratory capacity of epithelial cells. Overexpression enhances cell adhesion to collagen and fibronectin and suppresses anchorage independent growth. May contribute to tumor cell migratory capacity. This is PDZ and LIM domain protein 2 (PDLIM2) from Homo sapiens (Human).